The chain runs to 278 residues: Large ribosomal subunit protein uL2 (278 aa).

Disordered regions lie at residues 1 to 20 (MGIR…SVSD), 25 to 58 (TRST…GGGH), and 223 to 278 (GVVM…GKKR). Basic residues predominate over residues 37-58 (LHGKGGRNAHGRITTRHKGGGH). Over residues 253 to 268 (PEGRTRKPNKPSDKLI) the composition is skewed to basic and acidic residues. A compositionally biased stretch (basic residues) spans 269-278 (VRRRRTGKKR).

Belongs to the universal ribosomal protein uL2 family. As to quaternary structure, part of the 50S ribosomal subunit. Forms a bridge to the 30S subunit in the 70S ribosome.

Functionally, one of the primary rRNA binding proteins. Required for association of the 30S and 50S subunits to form the 70S ribosome, for tRNA binding and peptide bond formation. It has been suggested to have peptidyltransferase activity; this is somewhat controversial. Makes several contacts with the 16S rRNA in the 70S ribosome. This chain is Large ribosomal subunit protein uL2, found in Mycolicibacterium smegmatis (strain ATCC 700084 / mc(2)155) (Mycobacterium smegmatis).